The primary structure comprises 365 residues: Metallophosphoesterase 1 homolog (365 aa).

Residues 10-30 (PILLAIILVVYNEYFIFFIAF) traverse the membrane as a helical segment. A divalent metal cation contacts are provided by Asp54, Asp96, Asn132, His208, His262, and His264. Residues 319 to 339 (ILQIMVYIFGGIGIVILAFIL) form a helical membrane-spanning segment.

This sequence belongs to the metallophosphoesterase superfamily. MPPE1 family. Requires Mn(2+) as cofactor.

It is found in the endoplasmic reticulum-Golgi intermediate compartment membrane. Its subcellular location is the golgi apparatus. It localises to the cis-Golgi network membrane. Its function is as follows. Metallophosphoesterase required for transport of GPI-anchor proteins from the endoplasmic reticulum to the Golgi. Acts in lipid remodeling steps of GPI-anchor maturation by mediating the removal of a side-chain ethanolamine-phosphate (EtNP) from the second Man (Man2) of the GPI intermediate, an essential step for efficient transport of GPI-anchor proteins. The sequence is that of Metallophosphoesterase 1 homolog from Caenorhabditis elegans.